The chain runs to 269 residues: 3-methyl-2-oxobutanoate hydroxymethyltransferase (269 aa).

Aspartate 43 and aspartate 82 together coordinate Mg(2+). 3-methyl-2-oxobutanoate-binding positions include aspartate 43–serine 44, aspartate 82, and lysine 110. Glutamate 112 contributes to the Mg(2+) binding site. The active-site Proton acceptor is glutamate 179.

Belongs to the PanB family. As to quaternary structure, homodecamer; pentamer of dimers. It depends on Mg(2+) as a cofactor.

It localises to the cytoplasm. The catalysed reaction is 3-methyl-2-oxobutanoate + (6R)-5,10-methylene-5,6,7,8-tetrahydrofolate + H2O = 2-dehydropantoate + (6S)-5,6,7,8-tetrahydrofolate. It participates in cofactor biosynthesis; (R)-pantothenate biosynthesis; (R)-pantoate from 3-methyl-2-oxobutanoate: step 1/2. Catalyzes the reversible reaction in which hydroxymethyl group from 5,10-methylenetetrahydrofolate is transferred onto alpha-ketoisovalerate to form ketopantoate. This chain is 3-methyl-2-oxobutanoate hydroxymethyltransferase, found in Acinetobacter baylyi (strain ATCC 33305 / BD413 / ADP1).